Reading from the N-terminus, the 553-residue chain is MSATATVATTPEGIPVIILKEGSSRTYGKEALRINIAAVKAVEEALKTTYGPRGMDKMLVDSLGDITITNDGATILDKMDLQHPAAKLLVQIAKGQDEETADGTKTAVIFSGELVKKAEELLYKEIHPTIIVSGYKKAEEMAIKTIEEISTKVSVNDTEILRKVALTSLSSKAVAGAREHLADIVVKAITQVAELRGDKWYVDLDNVQIVKKHGGSINDTQIVYGIIVDKEVVHPGMPKRVENAKIALLDASLEVEKPELDAEIRINDPTQMKKFLDEEENILKEKVDKIAQTGANVVICQKGIDEVAQHYLAKKGILAVRRAKKSDLEKLARATGGRVVSNIDELTSQDLGYATLVEERKIGEDKMVFIEGAKNPKAVSILIRGGLERVVDETERALRDALGTVADVVRDGRAIAGGGAVETEIAKRLRKYAPQVGGKEQLAIEAYANALESLVMILIENGGFDPIELLVKLRSAHENETNKWHGINVYTGQIQDMWSLGVIEPAVVKMNAIKAATEASTLILRIDDLISAGKKSEGKTGEKKESEKGKEED.

The disordered stretch occupies residues 534–553 (KKSEGKTGEKKESEKGKEED).

The protein belongs to the TCP-1 chaperonin family. Forms a Heterooligomeric complex of two stacked eight-membered rings.

Molecular chaperone; binds unfolded polypeptides in vitro, and has a weak ATPase activity. This is Thermosome subunit beta (thsB) from Sulfolobus acidocaldarius (strain ATCC 33909 / DSM 639 / JCM 8929 / NBRC 15157 / NCIMB 11770).